The following is an 891-amino-acid chain: DNA mismatch repair protein MutS (891 aa).

ATP is bound at residue 632 to 639; sequence GPNMAGKS.

The protein belongs to the DNA mismatch repair MutS family.

Functionally, this protein is involved in the repair of mismatches in DNA. It is possible that it carries out the mismatch recognition step. This protein has a weak ATPase activity. The protein is DNA mismatch repair protein MutS of Rhodopirellula baltica (strain DSM 10527 / NCIMB 13988 / SH1).